The chain runs to 601 residues: A-type ATP synthase subunit A (601 aa).

236–243 (GPFGSGKT) is a binding site for ATP.

The protein belongs to the ATPase alpha/beta chains family. In terms of assembly, has multiple subunits with at least A(3), B(3), C, D, E, F, H, I and proteolipid K(x).

The protein localises to the cell membrane. The catalysed reaction is ATP + H2O + 4 H(+)(in) = ADP + phosphate + 5 H(+)(out). Component of the A-type ATP synthase that produces ATP from ADP in the presence of a proton gradient across the membrane. The A chain is the catalytic subunit. This is A-type ATP synthase subunit A from Hyperthermus butylicus (strain DSM 5456 / JCM 9403 / PLM1-5).